Here is a 392-residue protein sequence, read N- to C-terminus: MFGTATRPSATRALLLGSGELGKEVAIELQRFGIEVIAADRYPNAPAMQVAHKAHVLDMLDGNALRALVTLVKPDLIIPEIEAIATDTLAQLEQEGVKVVPNARATQLTMNREGIRRLAAEELGLPTSPYRFAQSKEEFIAAVEAIGLPCVVKPVMSSSGKGQSVLRDLAKLDESWTYAQEGGRAGRGKVIVEGFVPFEYEITLLTVRAVDGIHFCDPIGHRQEDGDYRESWQPQAMSTLALARSKEVAAKVVGALGGYGLFGVELFIRGDEVWFSEVSPRPHDTGMVTLISQDLSEFALHVRAILGLPIGTITQYGPSASAVVLRDGHSQDIRYQGIGAALALVSGAQLRLFGKPEIAGRRRLGVALARGQQCEEAVEKAKAVAARVEVIC.

Residues E20–L21 and E80 each bind N(1)-(5-phospho-beta-D-ribosyl)glycinamide. ATP contacts are provided by residues R112, K153, S158–Q163, E193–V196, and E201. The ATP-grasp domain maps to R117–L306. Mg(2+)-binding residues include E265 and E277. Residues D284, K355, and R362–R363 each bind N(1)-(5-phospho-beta-D-ribosyl)glycinamide.

It belongs to the PurK/PurT family. As to quaternary structure, homodimer.

The enzyme catalyses N(1)-(5-phospho-beta-D-ribosyl)glycinamide + formate + ATP = N(2)-formyl-N(1)-(5-phospho-beta-D-ribosyl)glycinamide + ADP + phosphate + H(+). Its pathway is purine metabolism; IMP biosynthesis via de novo pathway; N(2)-formyl-N(1)-(5-phospho-D-ribosyl)glycinamide from N(1)-(5-phospho-D-ribosyl)glycinamide (formate route): step 1/1. Functionally, involved in the de novo purine biosynthesis. Catalyzes the transfer of formate to 5-phospho-ribosyl-glycinamide (GAR), producing 5-phospho-ribosyl-N-formylglycinamide (FGAR). Formate is provided by PurU via hydrolysis of 10-formyl-tetrahydrofolate. This is Formate-dependent phosphoribosylglycinamide formyltransferase from Aeromonas salmonicida (strain A449).